Reading from the N-terminus, the 85-residue chain is Large ribosomal subunit protein bL27 (85 aa).

Residues 1–22 (MAHKKGASSTRNGRDSNAQRLG) form a disordered region. The span at 7 to 19 (ASSTRNGRDSNAQ) shows a compositional bias: polar residues.

Belongs to the bacterial ribosomal protein bL27 family.

The polypeptide is Large ribosomal subunit protein bL27 (rpmA) (Streptomyces griseus).